The primary structure comprises 290 residues: Agmatinase (290 aa).

Mn(2+) is bound by residues histidine 112, aspartate 135, histidine 137, aspartate 139, aspartate 216, and aspartate 218.

Belongs to the arginase family. Agmatinase subfamily. Mn(2+) serves as cofactor.

It catalyses the reaction agmatine + H2O = urea + putrescine. It participates in amine and polyamine biosynthesis; putrescine biosynthesis via agmatine pathway; putrescine from agmatine: step 1/1. Catalyzes the formation of putrescine from agmatine. This is Agmatinase (speB) from Bacillus subtilis (strain 168).